Consider the following 326-residue polypeptide: Undecaprenyl-phosphate 4-deoxy-4-formamido-L-arabinose transferase (326 aa).

Transmembrane regions (helical) follow at residues 236 to 256 and 270 to 290; these read LSVV…LLIV and VFTL…AMGL.

The protein belongs to the glycosyltransferase 2 family.

The protein resides in the cell inner membrane. It catalyses the reaction UDP-4-deoxy-4-formamido-beta-L-arabinose + di-trans,octa-cis-undecaprenyl phosphate = 4-deoxy-4-formamido-alpha-L-arabinopyranosyl di-trans,octa-cis-undecaprenyl phosphate + UDP. The protein operates within glycolipid biosynthesis; 4-amino-4-deoxy-alpha-L-arabinose undecaprenyl phosphate biosynthesis; 4-amino-4-deoxy-alpha-L-arabinose undecaprenyl phosphate from UDP-4-deoxy-4-formamido-beta-L-arabinose and undecaprenyl phosphate: step 1/2. It functions in the pathway bacterial outer membrane biogenesis; lipopolysaccharide biosynthesis. Functionally, catalyzes the transfer of 4-deoxy-4-formamido-L-arabinose from UDP to undecaprenyl phosphate. The modified arabinose is attached to lipid A and is required for resistance to polymyxin and cationic antimicrobial peptides. The sequence is that of Undecaprenyl-phosphate 4-deoxy-4-formamido-L-arabinose transferase from Proteus mirabilis (strain HI4320).